The sequence spans 327 residues: GTPase Obg (327 aa).

In terms of domain architecture, Obg spans Met-1 to Leu-159. Residues Ala-160–Ile-327 form the OBG-type G domain. Residues Gly-166–Ser-173, Phe-191–Ile-195, Asp-213–Gly-216, Asn-280–Glu-283, and Ser-309–Ser-311 each bind ATP. Mg(2+) contacts are provided by Ser-173 and Thr-193.

Belongs to the TRAFAC class OBG-HflX-like GTPase superfamily. OBG GTPase family. In terms of assembly, monomer. The cofactor is Mg(2+).

It is found in the cytoplasm. Its function is as follows. An essential GTPase which binds GTP, GDP and possibly (p)ppGpp with moderate affinity, with high nucleotide exchange rates and a fairly low GTP hydrolysis rate. Plays a role in control of the cell cycle, stress response, ribosome biogenesis and in those bacteria that undergo differentiation, in morphogenesis control. This chain is GTPase Obg, found in Prochlorococcus marinus (strain MIT 9301).